A 165-amino-acid chain; its full sequence is Putative 4-hydroxy-4-methyl-2-oxoglutarate aldolase (165 aa).

Residues 80-83 (GGNL) and Arg-102 each bind substrate. Asp-103 serves as a coordination point for a divalent metal cation.

The protein belongs to the class II aldolase/RraA-like family. Homotrimer. It depends on a divalent metal cation as a cofactor.

The catalysed reaction is 4-hydroxy-4-methyl-2-oxoglutarate = 2 pyruvate. It carries out the reaction oxaloacetate + H(+) = pyruvate + CO2. Its function is as follows. Catalyzes the aldol cleavage of 4-hydroxy-4-methyl-2-oxoglutarate (HMG) into 2 molecules of pyruvate. Also contains a secondary oxaloacetate (OAA) decarboxylase activity due to the common pyruvate enolate transition state formed following C-C bond cleavage in the retro-aldol and decarboxylation reactions. The sequence is that of Putative 4-hydroxy-4-methyl-2-oxoglutarate aldolase from Cupriavidus necator (strain ATCC 17699 / DSM 428 / KCTC 22496 / NCIMB 10442 / H16 / Stanier 337) (Ralstonia eutropha).